The chain runs to 131 residues: Fimbrial assembly protein, serogroups C1 and C2 (131 aa).

This Dichelobacter nodosus (Bacteroides nodosus) protein is Fimbrial assembly protein, serogroups C1 and C2 (fimB).